Reading from the N-terminus, the 163-residue chain is Putative defense protein 3 (163 aa).

The first 18 residues, Met1 to Ala18, serve as a signal peptide directing secretion. Residues Tyr19–Lys163 form the Reelin domain. A disulfide bond links Cys28 and Cys103.

Belongs to the insect defense protein family.

The protein resides in the secreted. In terms of biological role, may have antimicrobial activity. This is Putative defense protein 3 from Antheraea mylitta (Tasar silkworm).